Consider the following 376-residue polypeptide: Glutamate 5-kinase (376 aa).

Lysine 16 provides a ligand contact to ATP. Serine 56, aspartate 143, and asparagine 155 together coordinate substrate. 175–176 (TD) provides a ligand contact to ATP. The region spanning 283–361 (RGALSLDEGA…RDIETTLGYV (79 aa)) is the PUA domain.

It belongs to the glutamate 5-kinase family.

It localises to the cytoplasm. It carries out the reaction L-glutamate + ATP = L-glutamyl 5-phosphate + ADP. The protein operates within amino-acid biosynthesis; L-proline biosynthesis; L-glutamate 5-semialdehyde from L-glutamate: step 1/2. Catalyzes the transfer of a phosphate group to glutamate to form L-glutamate 5-phosphate. The chain is Glutamate 5-kinase from Halorhodospira halophila (strain DSM 244 / SL1) (Ectothiorhodospira halophila (strain DSM 244 / SL1)).